Here is a 201-residue protein sequence, read N- to C-terminus: Oxalate oxidase 1 (201 aa).

Cysteine 10 and cysteine 26 are oxidised to a cystine. The region spanning serine 40 to glutamate 191 is the Cupin type-1 domain. A glycan (N-linked (GlcNAc...) asparagine) is linked at asparagine 47. Residues asparagine 75 and asparagine 85 each contribute to the oxalate site. Mn(2+) contacts are provided by histidine 88, histidine 90, glutamate 95, and histidine 137. Oxalate is bound by residues histidine 90 and glutamate 95.

It belongs to the germin family. Homo hexamer; a trimer of dimers. Post-translationally, glycosylated. A form called G contains antennary GlcNAc residues, whereas a form called G' lacks antennary GlcNAc residues in its otherwise identical glycans.

It is found in the secreted. It localises to the extracellular space. The protein resides in the apoplast. The protein localises to the cell wall. It carries out the reaction oxalate + O2 + 2 H(+) = H2O2 + 2 CO2. Releases hydrogen peroxide in the apoplast which may be important for cross-linking reactions in the cell wall biochemistry. May play an important role in several aspects of plant growth and defense mechanisms. The polypeptide is Oxalate oxidase 1 (Hordeum vulgare (Barley)).